The following is a 571-amino-acid chain: Dehydrocurvularin exporter (571 aa).

The segment at 1–34 is disordered; that stretch reads MADGSDLENNHKPELDRSQPGSTSNGSQEQKDPD. Over residues 8–17 the composition is skewed to basic and acidic residues; it reads ENNHKPELDR. A compositionally biased stretch (polar residues) spans 19–28; it reads QPGSTSNGSQ. An N-linked (GlcNAc...) asparagine glycan is attached at asparagine 25. The next 14 helical transmembrane spans lie at 47–67, 86–106, 120–140, 143–163, 171–191, 202–222, 238–258, 275–295, 317–337, 350–370, 379–399, 405–425, 443–463, and 514–534; these read ILVM…IGII, WYGS…GKLF, FIFL…SVII, AIQG…INYV, LLIG…PVIG, WCFW…LLFL, IILA…VCLT, VIAT…TEWF, LFCL…PIYF, VNTL…GGVI, FELL…ILDV, MYIG…QIPM, IMVM…QSLF, and VFAF…IIPF. Positions 538-571 are disordered; it reads PDHGKKDKPATEEAAEEKSEAEGKVSGDKEENHS.

The protein belongs to the major facilitator superfamily. TCR/Tet family.

The protein localises to the cell membrane. Functionally, efflux pump that is probably involved in the export of dehydrocurvularin. This is Dehydrocurvularin exporter from Aspergillus terreus.